The sequence spans 489 residues: uncharacterized protein (489 aa).

This is an uncharacterized protein from Bacillus subtilis (strain 168).